A 343-amino-acid polypeptide reads, in one-letter code: Fructose-bisphosphate aldolase (343 aa).

S53 contributes to the D-glyceraldehyde 3-phosphate binding site. Residue D95 is the Proton donor of the active site. Residues H96, D131, E161, and H212 each contribute to the Zn(2+) site. G213 is a dihydroxyacetone phosphate binding site. H252 contributes to the Zn(2+) binding site. Dihydroxyacetone phosphate contacts are provided by residues 253-255 (GGS) and 274-277 (NIDT).

Belongs to the class II fructose-bisphosphate aldolase family. It depends on Zn(2+) as a cofactor.

The enzyme catalyses beta-D-fructose 1,6-bisphosphate = D-glyceraldehyde 3-phosphate + dihydroxyacetone phosphate. It participates in carbohydrate degradation; glycolysis; D-glyceraldehyde 3-phosphate and glycerone phosphate from D-glucose: step 4/4. Functionally, catalyzes the aldol condensation of dihydroxyacetone phosphate (DHAP or glycerone-phosphate) with glyceraldehyde 3-phosphate (G3P) to form fructose 1,6-bisphosphate (FBP) in gluconeogenesis and the reverse reaction in glycolysis. The chain is Fructose-bisphosphate aldolase (fba) from Streptomyces coelicolor (strain ATCC BAA-471 / A3(2) / M145).